Reading from the N-terminus, the 285-residue chain is Enterobactin synthase component B (285 aa).

The tract at residues 2-213 (AIPKLQAYAL…EELLPAPIPA (212 aa)) is isochorismatase. Residues 209 to 284 (APIPASKAAL…AWWKLLSREV (76 aa)) form the Carrier domain. Mg(2+)-binding residues include Asp-227, Gly-242, and Asp-244. Residue Ser-245 is modified to O-(pantetheine 4'-phosphoryl)serine.

The protein in the N-terminal section; belongs to the isochorismatase family. As to quaternary structure, proteins EntB, EntD, EntE, and EntF form a multienzyme complex called enterobactin synthase. Homodimer. Also forms a specific pairwise interaction with EntC; this interaction likely facilitates substrate channeling to connect the EntB and EntC active sites. Mg(2+) is required as a cofactor. 4'-phosphopantetheine is transferred from CoA to a specific serine of apo-EntB by EntD. Holo-EntB so formed is then acylated with 2,3-dihydroxybenzoate in a reaction catalyzed by EntE.

The protein localises to the cytoplasm. It catalyses the reaction 3 2,3-dihydroxybenzoate + 3 L-serine + 6 ATP = enterobactin + 6 AMP + 6 diphosphate + 4 H(+). The enzyme catalyses isochorismate + H2O = (2S,3S)-2,3-dihydroxy-2,3-dihydrobenzoate + pyruvate. It participates in siderophore biosynthesis; enterobactin biosynthesis. In terms of biological role, involved in the biosynthesis of the siderophore enterobactin (enterochelin), which is a macrocyclic trimeric lactone of N-(2,3-dihydroxybenzoyl)-serine. The serine trilactone serves as a scaffolding for the three catechol functionalities that provide hexadentate coordination for the tightly ligated iron(3+) atoms. EntB is a bifunctional protein that serves as an isochorismate lyase and an aryl carrier protein (ArCP). Catalyzes the conversion of isochorismate to 2,3-dihydro-2,3-dihydroxybenzoate (2,3-diDHB), the precursor of 2,3-dihydroxybenzoate (DHB). In the enterobactin assembly, EntB functions as an aryl carrier protein phosphopantetheinylated near the C terminus by EntD to yield holo-EntB, which is then acylated by EntE with 2,3-dihydroxybenzoyl-AMP to form DHB-holo-EntB. Then this product will serve in the formation of the amide bond between 2,3-dihydroxybenzoate (DHB) and L-serine. This Escherichia coli O157:H7 protein is Enterobactin synthase component B.